Reading from the N-terminus, the 535-residue chain is Bifunctional purine biosynthesis protein PurH (535 aa).

Residues 1–145 (MAQTALISVS…KNWKDVGVLT (145 aa)) enclose the MGS-like domain.

This sequence belongs to the PurH family.

It catalyses the reaction (6R)-10-formyltetrahydrofolate + 5-amino-1-(5-phospho-beta-D-ribosyl)imidazole-4-carboxamide = 5-formamido-1-(5-phospho-D-ribosyl)imidazole-4-carboxamide + (6S)-5,6,7,8-tetrahydrofolate. It carries out the reaction IMP + H2O = 5-formamido-1-(5-phospho-D-ribosyl)imidazole-4-carboxamide. It functions in the pathway purine metabolism; IMP biosynthesis via de novo pathway; 5-formamido-1-(5-phospho-D-ribosyl)imidazole-4-carboxamide from 5-amino-1-(5-phospho-D-ribosyl)imidazole-4-carboxamide (10-formyl THF route): step 1/1. Its pathway is purine metabolism; IMP biosynthesis via de novo pathway; IMP from 5-formamido-1-(5-phospho-D-ribosyl)imidazole-4-carboxamide: step 1/1. The chain is Bifunctional purine biosynthesis protein PurH from Variovorax paradoxus (strain S110).